A 279-amino-acid chain; its full sequence is uncharacterized protein (279 aa).

Disordered regions lie at residues Y50–N109 and S249–L279. The span at N68–N109 shows a compositional bias: low complexity.

This is an uncharacterized protein from Dictyostelium discoideum (Social amoeba).